We begin with the raw amino-acid sequence, 350 residues long: MSALIPASEVILRHQDTFSDKQVVIAGDVQDLLPARLEARSVKVHTAWFHHRQTLARALGEQAVQFGLVADAALGGGCDTLIYYWPKNKPEALFQLTNLLSLLPLGCDVFVVGENRSGVRSAEPMLAAWCPLAKIDSARRCGLYHGELVQQPRFDAEAFWQSYQLEDVVIKTLPGVFSRDGLDNGSQLLLSTFDRPFQGHVADIGCGTGVLSAVLAKGAAGVQLTLSDAHAPALAASRATLAVNGLQGEVLAGDVYSAISGRFDMIISNPPFHDGMQTNLKAAETLIRGALNHLRIGGELRIVANAFLPYPDLLDAVFGNHQVLVQNGRFKVYQAIHQVKRSRDKGPKRR.

This sequence belongs to the methyltransferase superfamily. RsmC family. In terms of assembly, monomer.

It localises to the cytoplasm. The catalysed reaction is guanosine(1207) in 16S rRNA + S-adenosyl-L-methionine = N(2)-methylguanosine(1207) in 16S rRNA + S-adenosyl-L-homocysteine + H(+). Specifically methylates the guanine in position 1207 of 16S rRNA in the 30S particle. This Sodalis glossinidius (strain morsitans) protein is Ribosomal RNA small subunit methyltransferase C.